We begin with the raw amino-acid sequence, 551 residues long: Nicotianamine aminotransferase B (551 aa).

Residues 24–127 form a disordered region; it reads KSNGHGVAAA…GHAAAAAEEE (104 aa). A compositionally biased stretch (basic and acidic residues) spans 86-96; it reads GHRESNGHAEA. Positions 111–123 are enriched in low complexity; the sequence is AANGESNGHAAAA. Lysine 379 carries the post-translational modification N6-(pyridoxal phosphate)lysine.

It belongs to the class-I pyridoxal-phosphate-dependent aminotransferase family. Pyridoxal 5'-phosphate serves as cofactor. Expressed in roots, but not in leaves.

It catalyses the reaction nicotianamine + 2-oxoglutarate = 3''-deamino-3''-oxonicotianamine + L-glutamate. Involved in biosynthesis of mugineic acid family phytosiderophores. This is Nicotianamine aminotransferase B from Hordeum vulgare (Barley).